The chain runs to 340 residues: tRNA N6-adenosine threonylcarbamoyltransferase (340 aa).

Fe cation is bound by residues His113 and His117. Residues 135–139 (LVSGG), Asp169, Gly182, Asp186, and Asn274 contribute to the substrate site. A Fe cation-binding site is contributed by Asp302.

This sequence belongs to the KAE1 / TsaD family. It depends on Fe(2+) as a cofactor.

The protein localises to the cytoplasm. It carries out the reaction L-threonylcarbamoyladenylate + adenosine(37) in tRNA = N(6)-L-threonylcarbamoyladenosine(37) in tRNA + AMP + H(+). Its function is as follows. Required for the formation of a threonylcarbamoyl group on adenosine at position 37 (t(6)A37) in tRNAs that read codons beginning with adenine. Is involved in the transfer of the threonylcarbamoyl moiety of threonylcarbamoyl-AMP (TC-AMP) to the N6 group of A37, together with TsaE and TsaB. TsaD likely plays a direct catalytic role in this reaction. In Mycolicibacterium vanbaalenii (strain DSM 7251 / JCM 13017 / BCRC 16820 / KCTC 9966 / NRRL B-24157 / PYR-1) (Mycobacterium vanbaalenii), this protein is tRNA N6-adenosine threonylcarbamoyltransferase.